The primary structure comprises 263 residues: tRNA1(Val) (adenine(37)-N6)-methyltransferase (263 aa).

It belongs to the methyltransferase superfamily. tRNA (adenine-N(6)-)-methyltransferase family.

It localises to the cytoplasm. It carries out the reaction adenosine(37) in tRNA1(Val) + S-adenosyl-L-methionine = N(6)-methyladenosine(37) in tRNA1(Val) + S-adenosyl-L-homocysteine + H(+). Its function is as follows. Specifically methylates the adenine in position 37 of tRNA(1)(Val) (anticodon cmo5UAC). The protein is tRNA1(Val) (adenine(37)-N6)-methyltransferase of Pseudoalteromonas atlantica (strain T6c / ATCC BAA-1087).